We begin with the raw amino-acid sequence, 141 residues long: Nucleoside diphosphate kinase (141 aa).

The ATP site is built by K11, F59, R87, T93, R104, and N114. The active-site Pros-phosphohistidine intermediate is H117.

It belongs to the NDK family. In terms of assembly, homotetramer. It depends on Mg(2+) as a cofactor.

It localises to the cytoplasm. The enzyme catalyses a 2'-deoxyribonucleoside 5'-diphosphate + ATP = a 2'-deoxyribonucleoside 5'-triphosphate + ADP. It carries out the reaction a ribonucleoside 5'-diphosphate + ATP = a ribonucleoside 5'-triphosphate + ADP. Functionally, major role in the synthesis of nucleoside triphosphates other than ATP. The ATP gamma phosphate is transferred to the NDP beta phosphate via a ping-pong mechanism, using a phosphorylated active-site intermediate. This Vibrio campbellii (strain ATCC BAA-1116) protein is Nucleoside diphosphate kinase.